Here is a 449-residue protein sequence, read N- to C-terminus: Tubulin beta chain (449 aa).

GTP contacts are provided by Gln11, Glu69, Ser138, Gly142, Thr143, Gly144, Asn204, and Asn226. Glu69 is a Mg(2+) binding site. A disordered region spans residues 426 to 449 (QDATAEEEGEFDEEEGVMDAEGAA). Acidic residues predominate over residues 429-443 (TAEEEGEFDEEEGVM).

Belongs to the tubulin family. As to quaternary structure, dimer of alpha and beta chains. A typical microtubule is a hollow water-filled tube with an outer diameter of 25 nm and an inner diameter of 15 nM. Alpha-beta heterodimers associate head-to-tail to form protofilaments running lengthwise along the microtubule wall with the beta-tubulin subunit facing the microtubule plus end conferring a structural polarity. Microtubules usually have 13 protofilaments but different protofilament numbers can be found in some organisms and specialized cells. It depends on Mg(2+) as a cofactor.

It localises to the cytoplasm. The protein localises to the cytoskeleton. In terms of biological role, tubulin is the major constituent of microtubules, a cylinder consisting of laterally associated linear protofilaments composed of alpha- and beta-tubulin heterodimers. Microtubules grow by the addition of GTP-tubulin dimers to the microtubule end, where a stabilizing cap forms. Below the cap, tubulin dimers are in GDP-bound state, owing to GTPase activity of alpha-tubulin. This chain is Tubulin beta chain, found in Eimeria tenella (Coccidian parasite).